Reading from the N-terminus, the 311-residue chain is MATSAMHHPPIVVLAGATASGKSALAMAIAKKIGAEIISADSRQIYWELTIGAAKPSPKELQEVPHHFINEKHIGEPFTAGDFAVEAWQRITAIHQRDKRVVVAGGSTLYVEGLLKGFANLPSANEAIRQRLETELQTLGSEALYQRLVKLDPTQAATLDATKTQRLIRSLEIIESSGTSVTALKAAQQPPPSHFTFLPFALFLPRETLYQRINQRVDDMMANGLLHEAEALYQTYCDTWQERNLSALRTVGYQELFAYFEGRHSLDEAINLIKQHTRNYAKRQITFFSNHLALRWIEQAEMEEIVEQHGF.

16–23 (GATASGKS) is a binding site for ATP. 18–23 (TASGKS) is a substrate binding site. Interaction with substrate tRNA regions lie at residues 41–44 (DSRQ) and 165–169 (QRLIR).

It belongs to the IPP transferase family. Monomer. Mg(2+) serves as cofactor.

It carries out the reaction adenosine(37) in tRNA + dimethylallyl diphosphate = N(6)-dimethylallyladenosine(37) in tRNA + diphosphate. Its function is as follows. Catalyzes the transfer of a dimethylallyl group onto the adenine at position 37 in tRNAs that read codons beginning with uridine, leading to the formation of N6-(dimethylallyl)adenosine (i(6)A). In Chlorobium chlorochromatii (strain CaD3), this protein is tRNA dimethylallyltransferase.